Here is a 126-residue protein sequence, read N- to C-terminus: Small ribosomal subunit protein eS6 (126 aa).

Belongs to the eukaryotic ribosomal protein eS6 family.

The sequence is that of Small ribosomal subunit protein eS6 from Methanothermobacter thermautotrophicus (strain ATCC 29096 / DSM 1053 / JCM 10044 / NBRC 100330 / Delta H) (Methanobacterium thermoautotrophicum).